A 535-amino-acid polypeptide reads, in one-letter code: Dimethylaniline monooxygenase [N-oxide-forming] 2 (535 aa).

Alanine 2 carries the post-translational modification N-acetylalanine. FAD contacts are provided by residues 9–13, glutamate 32, 40–41, and 61–62; these read GAGVS, LW, and NT. NADP(+) is bound by residues 60-61 and 195-198; these read TN and SASD. Residue lysine 492 forms a Glycyl lysine isopeptide (Lys-Gly) (interchain with G-Cter in SUMO) linkage. A helical transmembrane segment spans residues 510-530; it reads FPVSFLLKFLGLFALVLAFLF.

It belongs to the FMO family. It depends on FAD as a cofactor. The cofactor is Mg(2+). In terms of tissue distribution, lung.

The protein resides in the microsome membrane. It localises to the endoplasmic reticulum membrane. It catalyses the reaction N,N-dimethylaniline + NADPH + O2 + H(+) = N,N-dimethylaniline N-oxide + NADP(+) + H2O. Catalyzes the oxidative metabolism of numerous xenobiotics, including mainly therapeutic drugs and insecticides that contain a soft nucleophile, most commonly nitrogen and sulfur and participates to their bioactivation. Most drug substrates are tertiary amines such as prochlorperazine and trifluoperazine which are N-oxygenated to form the N-oxide, or sulfides such as thiourea and ethionamide, which are S-oxygenated to the sulfoxide. Others include primary alkylamines such as N-dodecylamine and octan-1-amine that are sequentially monooxygenated to oximes through intermediate hydroxylamines and both steps are NADPH- and oxygen-dependent. Also metabolized N-Deacetyl ketoconazole (DAK) to N-hydroxy-DAK and appears to further metabolizes N-hydroxy-DAK to two others metabolites. Also catalyzes S-oxygenation of the thioether-containing organophosphate insecticides, phorate and disulfoton. This is Dimethylaniline monooxygenase [N-oxide-forming] 2 from Oryctolagus cuniculus (Rabbit).